We begin with the raw amino-acid sequence, 224 residues long: ATP-dependent dethiobiotin synthetase BioD (224 aa).

N13 to I18 serves as a coordination point for ATP. Residue T17 participates in Mg(2+) binding. K38 is an active-site residue. Residue S42 coordinates substrate. Residues D55, E116–G119, N176–N177, and N211 each bind ATP. 2 residues coordinate Mg(2+): D55 and E116.

Belongs to the dethiobiotin synthetase family. Homodimer. Requires Mg(2+) as cofactor.

The protein resides in the cytoplasm. The catalysed reaction is (7R,8S)-7,8-diammoniononanoate + CO2 + ATP = (4R,5S)-dethiobiotin + ADP + phosphate + 3 H(+). The protein operates within cofactor biosynthesis; biotin biosynthesis; biotin from 7,8-diaminononanoate: step 1/2. Catalyzes a mechanistically unusual reaction, the ATP-dependent insertion of CO2 between the N7 and N8 nitrogen atoms of 7,8-diaminopelargonic acid (DAPA, also called 7,8-diammoniononanoate) to form a ureido ring. The protein is ATP-dependent dethiobiotin synthetase BioD of Buchnera aphidicola subsp. Acyrthosiphon pisum (strain 5A).